A 144-amino-acid polypeptide reads, in one-letter code: Cell division protein SepF (144 aa).

A disordered region spans residues 16-42 (DEMNEAPYTEAEQQEEEVPQAQKNERR).

Belongs to the SepF family. In terms of assembly, homodimer. Interacts with FtsZ.

It is found in the cytoplasm. Its function is as follows. Cell division protein that is part of the divisome complex and is recruited early to the Z-ring. Probably stimulates Z-ring formation, perhaps through the cross-linking of FtsZ protofilaments. Its function overlaps with FtsA. The chain is Cell division protein SepF from Lactobacillus gasseri (strain ATCC 33323 / DSM 20243 / BCRC 14619 / CIP 102991 / JCM 1131 / KCTC 3163 / NCIMB 11718 / NCTC 13722 / AM63).